We begin with the raw amino-acid sequence, 200 residues long: Inner membrane-spanning protein YciB (200 aa).

The next 6 helical transmembrane spans lie at 7–27 (HPLFKLATELGPLIVFFVVNA), 32–52 (FAATGAFMVAIVAAMIASYVV), 56–76 (VPLMAIVTGIVVLVFGTLTLV), 93–113 (LFAAVLGGGLLFNRSFIAIMF), 126–146 (ILTFRWALFFAAMAVLNEIIW), and 153–173 (FWVGFKAFGVVPLTMIFAIAQ).

Belongs to the YciB family.

The protein localises to the cell inner membrane. In terms of biological role, plays a role in cell envelope biogenesis, maintenance of cell envelope integrity and membrane homeostasis. This chain is Inner membrane-spanning protein YciB, found in Bradyrhizobium sp. (strain BTAi1 / ATCC BAA-1182).